A 931-amino-acid polypeptide reads, in one-letter code: Protein translocase subunit SecA (931 aa).

ATP contacts are provided by residues Gln-87, 105–109 (GEGKT), and Asp-515. Cys-915, Cys-917, Cys-926, and His-927 together coordinate Zn(2+).

Belongs to the SecA family. As to quaternary structure, monomer and homodimer. Part of the essential Sec protein translocation apparatus which comprises SecA, SecYEG and auxiliary proteins SecDF-YajC and YidC. Requires Zn(2+) as cofactor.

The protein localises to the cell inner membrane. It localises to the cytoplasm. The enzyme catalyses ATP + H2O + cellular proteinSide 1 = ADP + phosphate + cellular proteinSide 2.. Part of the Sec protein translocase complex. Interacts with the SecYEG preprotein conducting channel. Has a central role in coupling the hydrolysis of ATP to the transfer of proteins into and across the cell membrane, serving both as a receptor for the preprotein-SecB complex and as an ATP-driven molecular motor driving the stepwise translocation of polypeptide chains across the membrane. The protein is Protein translocase subunit SecA of Burkholderia pseudomallei (strain K96243).